A 514-amino-acid polypeptide reads, in one-letter code: Maturase K (514 aa).

The protein belongs to the intron maturase 2 family. MatK subfamily.

It localises to the plastid. The protein resides in the chloroplast. In terms of biological role, usually encoded in the trnK tRNA gene intron. Probably assists in splicing its own and other chloroplast group II introns. This is Maturase K from Acer monspessulanum (Montpellier maple).